The following is a 497-amino-acid chain: Probable cytosol aminopeptidase (497 aa).

The Mn(2+) site is built by lysine 265 and aspartate 270. Lysine 277 is an active-site residue. Mn(2+)-binding residues include aspartate 288, aspartate 347, and glutamate 349. Residue arginine 351 is part of the active site.

It belongs to the peptidase M17 family. It depends on Mn(2+) as a cofactor.

It is found in the cytoplasm. The catalysed reaction is Release of an N-terminal amino acid, Xaa-|-Yaa-, in which Xaa is preferably Leu, but may be other amino acids including Pro although not Arg or Lys, and Yaa may be Pro. Amino acid amides and methyl esters are also readily hydrolyzed, but rates on arylamides are exceedingly low.. The enzyme catalyses Release of an N-terminal amino acid, preferentially leucine, but not glutamic or aspartic acids.. Presumably involved in the processing and regular turnover of intracellular proteins. Catalyzes the removal of unsubstituted N-terminal amino acids from various peptides. The polypeptide is Probable cytosol aminopeptidase (Geobacillus thermodenitrificans (strain NG80-2)).